The following is a 383-amino-acid chain: Na(+)/H(+) antiporter NhaA (383 aa).

The next 11 membrane-spanning stretches (helical) occupy residues 14–34 (AGGI…NSPL), 47–67 (FGMS…FLLI), 87–107 (IFPA…YVAF), 117–137 (GWAI…ALLG), 146–166 (VFLL…IALF), 171–191 (LSTM…MLNA), 205–225 (AILW…GVVI), 252–272 (VAFG…LEGV), 280–300 (MLPL…IFTF), 321–341 (IFAV…ISSL), and 356–376 (LGIL…LHFS).

It belongs to the NhaA Na(+)/H(+) (TC 2.A.33) antiporter family.

Its subcellular location is the cell inner membrane. The enzyme catalyses Na(+)(in) + 2 H(+)(out) = Na(+)(out) + 2 H(+)(in). Its function is as follows. Na(+)/H(+) antiporter that extrudes sodium in exchange for external protons. This is Na(+)/H(+) antiporter NhaA from Vibrio alginolyticus.